The following is a 539-amino-acid chain: Chitin deacetylase 1 (539 aa).

The first 23 residues, Met-1 to Gly-23, serve as a signal peptide directing secretion. The 63-residue stretch at Gln-42–Leu-104 folds into the Chitin-binding type-2 domain. 6 disulfides stabilise this stretch: Cys-80/Cys-93, Cys-122/Cys-134, Cys-129/Cys-147, Cys-141/Cys-156, Cys-168/Cys-180, and Cys-173/Cys-178. Positions Leu-121 to Asp-157 constitute an LDL-receptor class A domain. Zn(2+) is bound at residue Asp-206. 5 disulfides stabilise this stretch: Cys-230-Cys-489, Cys-354-Cys-361, Cys-391-Cys-397, Cys-497-Cys-520, and Cys-503-Cys-523. Asn-244 carries N-linked (GlcNAc...) asparagine glycosylation. Zn(2+) is bound by residues His-261 and His-265. Asn-296 carries an N-linked (GlcNAc...) asparagine glycan.

Belongs to the carbohydrate esterase 4 (CE4) family. In terms of assembly, interacts with CPAP3-A1. The cofactor is Zn(2+). In terms of tissue distribution, highly expressed in epidermis and head. Moderate expression levels in fat body, Malpighian tubule, testis and midgut. Low expression in silk gland and ovary.

Its subcellular location is the secreted. It catalyses the reaction [(1-&gt;4)-N-acetyl-beta-D-glucosaminyl](n) + n H2O = chitosan + n acetate. With respect to regulation, binding to the accessory protein CPAP3-A1 is essential for chitinase activity. In terms of biological role, hydrolyzes the N-acetamido groups of N-acetyl-D-glucosamine residues in chitin. This is Chitin deacetylase 1 from Bombyx mori (Silk moth).